Consider the following 465-residue polypeptide: Phosphatidylserine synthase 1 (465 aa).

Residues 1 to 35 (MATTFRSQTLSKDDVNYRMHFRMINEQQVEDITIQ) lie on the Cytoplasmic side of the membrane. Residues 36-56 (FFYKPHTISLLTVTVLSLMYF) form a helical membrane-spanning segment. Topologically, residues 57 to 70 (AFTRDDGDPDSNLR) are lumenal. Residues 71–91 (VGLILLVSFFLVISVLAFPNG) traverse the membrane as a helical segment. Topologically, residues 92–102 (PFTRPHPAIWR) are cytoplasmic. The helical transmembrane segment at 103-123 (IVFGLSVLYFLFLVFIIFLNW) threads the bilayer. Over 124 to 286 (DQVKALMFWL…WLDPKSSLQR (163 aa)) the chain is Lumenal. A helical membrane pass occupies residues 287-307 (VMGVYLFMIIWQLTELNTFFL). At 308–309 (KH) the chain is on the cytoplasmic side. A helical membrane pass occupies residues 310–330 (IFVFPACHALSWCRILFIGII). Residues 331 to 355 (TAPTVRQYYAYLTDTQCKRVGTQCW) are Lumenal-facing. A helical membrane pass occupies residues 356-376 (VFGAIAFLEALACIKFGQDLF). At 377–380 (SKTQ) the chain is on the cytoplasmic side. The chain crosses the membrane as a helical span at residues 381–401 (ILYVILWLVCLAFITFLCLYV). The Lumenal segment spans residues 402–465 (MVWYAENYGP…DSRTINGMEK (64 aa)). Residues 446–465 (CSTRKRRDSGDSRTINGMEK) form a disordered region.

It belongs to the phosphatidyl serine synthase family.

Its subcellular location is the endoplasmic reticulum membrane. The catalysed reaction is a 1,2-diacyl-sn-glycero-3-phosphoethanolamine + L-serine = a 1,2-diacyl-sn-glycero-3-phospho-L-serine + ethanolamine. It catalyses the reaction a 1,2-diacyl-sn-glycero-3-phosphocholine + L-serine = a 1,2-diacyl-sn-glycero-3-phospho-L-serine + choline. It functions in the pathway phospholipid metabolism; phosphatidylserine biosynthesis. In terms of biological role, catalyzes a base-exchange reaction in which the polar head group of phosphatidylethanolamine (PE) or phosphatidylcholine (PC) is replaced by L-serine. Catalyzes mainly the conversion of phosphatidylcholine but also converts, in vitro and to a lesser extent, phosphatidylethanolamine. This Danio rerio (Zebrafish) protein is Phosphatidylserine synthase 1 (ptdss1).